The following is a 494-amino-acid chain: MASRILMNIKEEVTCPICLELLTEPLSLDCGHSFCQACITANHKKSMLHQGERSCPLCRISYPSENLRPNRHLANIVERLREVMLSPEEGQKVDHCARHGEKLLLFCQQDGNVICWLCERSQEHRGHHTLLVEEVAQTYRENLQVALETMRQKQQDAEKLEADVREEQASWKIQIRDDKTNIMAEFKQLRDILDCEESNELQILEKEEKNILKRLTQSENDMVLQTQSMGVLISDLEHRLQGSVMELLQGVDEVIKRVKNVTLQKPKTFLNEKRRVFRAPDLKGMLQVFKELTEVQRYWVHVTLVPSHLSCAVISEDERQVRYQERIHQSFGKVKYFYGVLGSPSIRSGKHYWEVDVSNKSAWILGVCVSLKCTANRNGPRIENYQPKNGYWVIGLWNAGNYSAFQDSVKYSDFQDGSHSATYGPLIVPLFMTICPNRVGVFLDYEACTVSFFNVTSNGFLIYKFSNCRFSDSVFPYFSPMTCELPMTLCSPRS.

An N-acetylalanine modification is found at Ala2. The RING-type zinc finger occupies Cys15–Arg59. Ser86 bears the Phosphoserine mark. A B box-type zinc finger spans residues Gln91–Val132. Zn(2+)-binding residues include Cys96, His99, Cys118, and His124. A coiled-coil region spans residues Val132–Met222. A required for interaction with GABARAP and for autophagy region spans residues Phe186–Asn199. One can recognise a B30.2/SPRY domain in the interval Pro280–Ser494.

This sequence belongs to the TRIM/RBCC family. As to quaternary structure, can form homodimers and homotrimers. In addition to lower-order dimerization, also exhibits a higher-order multimerization and both low- and high-order multimerizations are essential for its restriction activity. Interacts with BTBD1 and BTBD2. Interacts with PSMC4, PSMC5, PSMD7 and HSPA8/HSC70. Interacts (via B30.2/SPRY domain) with HSPA1A/B. Interacts with PSMC2, MAP3K7/TAK1, TAB2 and TAB3. Interacts with SQSTM1. Interacts with TRIM6 and TRIM34. Interacts with ULK1 (phosphorylated form), GABARAP, GABARAPL1, GABARAPL2, MAP1LC3A, MAP1LC3C and BECN1. Degraded in a proteasome-independent fashion in the absence of viral infection but in a proteasome-dependent fashion following exposure to restriction sensitive virus. In terms of processing, autoubiquitinated in a RING finger- and UBE2D2-dependent manner. Monoubiquitinated by TRIM21. Deubiquitinated by Yersinia YopJ. Ubiquitination may not lead to proteasomal degradation.

Its subcellular location is the cytoplasm. It localises to the nucleus. It catalyses the reaction S-ubiquitinyl-[E2 ubiquitin-conjugating enzyme]-L-cysteine + [acceptor protein]-L-lysine = [E2 ubiquitin-conjugating enzyme]-L-cysteine + N(6)-ubiquitinyl-[acceptor protein]-L-lysine.. Its pathway is protein modification; protein ubiquitination. In terms of biological role, capsid-specific restriction factor that prevents infection from non-host-adapted retroviruses. Blocks viral replication early in the life cycle, after viral entry but before reverse transcription. In addition to acting as a capsid-specific restriction factor, also acts as a pattern recognition receptor that activates innate immune signaling in response to the retroviral capsid lattice. Binding to the viral capsid triggers its E3 ubiquitin ligase activity, and in concert with the heterodimeric ubiquitin conjugating enzyme complex UBE2V1-UBE2N (also known as UBC13-UEV1A complex) generates 'Lys-63'-linked polyubiquitin chains, which in turn are catalysts in the autophosphorylation of the MAP3K7/TAK1 complex (includes TAK1, TAB2, and TAB3). Activation of the MAP3K7/TAK1 complex by autophosphorylation results in the induction and expression of NF-kappa-B and MAPK-responsive inflammatory genes, thereby leading to an innate immune response in the infected cell. Plays a role in regulating autophagy through activation of autophagy regulator BECN1 by causing its dissociation from its inhibitors BCL2 and TAB2. This chain is Tripartite motif-containing protein 5 (TRIM5), found in Pithecia pithecia (White-faced saki).